Reading from the N-terminus, the 414-residue chain is Sec-independent protein translocase protein TatC (414 aa).

Residues 1–21 (MTQSTSVSKGGRVSRKAKKNP) are disordered. 6 consecutive transmembrane segments (helical) span residues 45–65 (IAVT…AWAI), 119–139 (GGLA…WRFI), 157–177 (IAGF…PMGL), 200–220 (FVIA…FTAM), 238–258 (IMIV…DPIS), and 259–279 (MLVL…FTRI). Positions 315–414 (IYDGDHKGIA…IQSSSFDDVL (100 aa)) are disordered. Residues 323–336 (IAGGGDAHPAGGSG) are compositionally biased toward gly residues. Over residues 345–357 (TAPTRAPSASESP) the composition is skewed to low complexity. Polar residues predominate over residues 403 to 414 (DTIQSSSFDDVL).

It belongs to the TatC family. In terms of assembly, the Tat system comprises two distinct complexes: a TatABC complex, containing multiple copies of TatA, TatB and TatC subunits, and a separate TatA complex, containing only TatA subunits. Substrates initially bind to the TatABC complex, which probably triggers association of the separate TatA complex to form the active translocon.

The protein localises to the cell membrane. Part of the twin-arginine translocation (Tat) system that transports large folded proteins containing a characteristic twin-arginine motif in their signal peptide across membranes. Together with TatB, TatC is part of a receptor directly interacting with Tat signal peptides. This is Sec-independent protein translocase protein TatC from Corynebacterium kroppenstedtii (strain DSM 44385 / JCM 11950 / CIP 105744 / CCUG 35717).